A 242-amino-acid chain; its full sequence is Tryptophan synthase alpha chain (242 aa).

Catalysis depends on proton acceptor residues Glu31 and Asp42.

This sequence belongs to the TrpA family. Tetramer of two alpha and two beta chains.

The enzyme catalyses (1S,2R)-1-C-(indol-3-yl)glycerol 3-phosphate + L-serine = D-glyceraldehyde 3-phosphate + L-tryptophan + H2O. It functions in the pathway amino-acid biosynthesis; L-tryptophan biosynthesis; L-tryptophan from chorismate: step 5/5. In terms of biological role, the alpha subunit is responsible for the aldol cleavage of indoleglycerol phosphate to indole and glyceraldehyde 3-phosphate. In Staphylococcus aureus (strain bovine RF122 / ET3-1), this protein is Tryptophan synthase alpha chain.